Reading from the N-terminus, the 103-residue chain is Small ribosomal subunit protein uS10 (103 aa).

Belongs to the universal ribosomal protein uS10 family. As to quaternary structure, part of the 30S ribosomal subunit.

Its function is as follows. Involved in the binding of tRNA to the ribosomes. This Shewanella amazonensis (strain ATCC BAA-1098 / SB2B) protein is Small ribosomal subunit protein uS10.